The following is a 472-amino-acid chain: Argininosuccinate lyase (472 aa).

It belongs to the lyase 1 family. Argininosuccinate lyase subfamily.

The protein resides in the cytoplasm. It carries out the reaction 2-(N(omega)-L-arginino)succinate = fumarate + L-arginine. Its pathway is amino-acid biosynthesis; L-arginine biosynthesis; L-arginine from L-ornithine and carbamoyl phosphate: step 3/3. This is Argininosuccinate lyase from Synechococcus sp. (strain CC9902).